Reading from the N-terminus, the 479-residue chain is Signal recognition particle subunit SRP54 1 (479 aa).

Residues 1 to 295 (MVLAELGGRI…DVKPFVSRLL (295 aa)) form a G-domain region. Residues 108–115 (GLQGAGKT), 190–194 (DTSGR), and 248–251 (TKMD) each bind GTP. The M-domain stretch occupies residues 296-479 (GKGDWSGLVD…MMGMFGGGGK (184 aa)).

This sequence belongs to the GTP-binding SRP family. SRP54 subfamily. In terms of assembly, component of a signal recognition particle (SRP) complex that consists of a 7SL RNA molecule of 300 nucleotides and six protein subunits: SRP72, SRP68, SRP54, SRP19, SRP14 and SRP9.

The protein resides in the cytoplasm. Its subcellular location is the endoplasmic reticulum. It carries out the reaction GTP + H2O = GDP + phosphate + H(+). Functionally, component of the signal recognition particle (SRP) complex, a ribonucleoprotein complex that mediates the cotranslational targeting of secretory and membrane proteins to the endoplasmic reticulum (ER). As part of the SRP complex, associates with the SRP receptor (SR) component SRPRA to target secretory proteins to the endoplasmic reticulum membrane. Binds to the signal sequence of presecretory proteins when they emerge from the ribosomes. Displays basal GTPase activity, and stimulates reciprocal GTPase activation of the SR subunit SRPRA. Forms a guanosine 5'-triphosphate (GTP)-dependent complex with the SR subunit SRPRA. SR compaction and GTPase mediated rearrangement of SR drive SRP-mediated cotranslational protein translocation into the ER. Requires the presence of SRP9/SRP14 and/or SRP19 to stably interact with RNA. This Arabidopsis thaliana (Mouse-ear cress) protein is Signal recognition particle subunit SRP54 1 (SRP-54A).